Reading from the N-terminus, the 155-residue chain is SsrA-binding protein (155 aa).

Belongs to the SmpB family.

Its subcellular location is the cytoplasm. Its function is as follows. Required for rescue of stalled ribosomes mediated by trans-translation. Binds to transfer-messenger RNA (tmRNA), required for stable association of tmRNA with ribosomes. tmRNA and SmpB together mimic tRNA shape, replacing the anticodon stem-loop with SmpB. tmRNA is encoded by the ssrA gene; the 2 termini fold to resemble tRNA(Ala) and it encodes a 'tag peptide', a short internal open reading frame. During trans-translation Ala-aminoacylated tmRNA acts like a tRNA, entering the A-site of stalled ribosomes, displacing the stalled mRNA. The ribosome then switches to translate the ORF on the tmRNA; the nascent peptide is terminated with the 'tag peptide' encoded by the tmRNA and targeted for degradation. The ribosome is freed to recommence translation, which seems to be the essential function of trans-translation. The polypeptide is SsrA-binding protein (Bordetella parapertussis (strain 12822 / ATCC BAA-587 / NCTC 13253)).